Reading from the N-terminus, the 361-residue chain is Histidinol-phosphate aminotransferase (361 aa).

Lys219 carries the N6-(pyridoxal phosphate)lysine modification.

The protein belongs to the class-II pyridoxal-phosphate-dependent aminotransferase family. Histidinol-phosphate aminotransferase subfamily. In terms of assembly, homodimer. It depends on pyridoxal 5'-phosphate as a cofactor.

It carries out the reaction L-histidinol phosphate + 2-oxoglutarate = 3-(imidazol-4-yl)-2-oxopropyl phosphate + L-glutamate. It functions in the pathway amino-acid biosynthesis; L-histidine biosynthesis; L-histidine from 5-phospho-alpha-D-ribose 1-diphosphate: step 7/9. This is Histidinol-phosphate aminotransferase from Cereibacter sphaeroides (strain ATCC 17023 / DSM 158 / JCM 6121 / CCUG 31486 / LMG 2827 / NBRC 12203 / NCIMB 8253 / ATH 2.4.1.) (Rhodobacter sphaeroides).